A 383-amino-acid chain; its full sequence is Geranylgeranyl pyrophosphate synthase esdpD (383 aa).

Positions 88, 91, and 120 each coordinate isopentenyl diphosphate. Residues aspartate 150 and aspartate 154 each contribute to the Mg(2+) site. A dimethylallyl diphosphate-binding site is contributed by arginine 159. An isopentenyl diphosphate-binding site is contributed by arginine 160. The dimethylallyl diphosphate site is built by lysine 237, threonine 238, and glutamine 271. Residue aspartate 274 coordinates Mg(2+). Positions 278, 288, and 298 each coordinate dimethylallyl diphosphate.

Belongs to the FPP/GGPP synthase family. It depends on Mg(2+) as a cofactor.

It catalyses the reaction isopentenyl diphosphate + dimethylallyl diphosphate = (2E)-geranyl diphosphate + diphosphate. The enzyme catalyses isopentenyl diphosphate + (2E)-geranyl diphosphate = (2E,6E)-farnesyl diphosphate + diphosphate. The catalysed reaction is isopentenyl diphosphate + (2E,6E)-farnesyl diphosphate = (2E,6E,10E)-geranylgeranyl diphosphate + diphosphate. It participates in secondary metabolite biosynthesis; terpenoid biosynthesis. Geranylgeranyl pyrophosphate synthase; part of the cluster that mediates the biosynthesis of shearones, diterpenoid pyrones (DPs) which are structurally diverse meroterpenoids consisting of a diterpene linked by a pyrone, and which may exhibit a range of bioactivities. Within the pathway, esdpD takes part to the biosynthesis of the molecular scaffold by providing geranylgeranyl pyrophosphate (GGPP) to the prenyltransferase esdpC for C-3 geranylgeranylation of the alpha-pyrone. The molecular scaffold is commonly biosynthesized by a series of enzymes including the non-reducing polyketide synthase (NR-PKS) esdpA that generates an alpha-pyrone; the prenyltransferase esdpC that attaches a geranylgeranyl pyrophosphate (GGPP) produced by the GGPP synthase (GGPPS) esdpD onto the pyrone unit; the FAD-dependent monooxygenase esdpE that converts an olefin on the diterpene unit into an epoxide; and the terpene cyclase esdpB that catalyzes the cyclization reactions to give the molecular backbone shearone A. In the modification steps, esdpF oxidizes the hydroxy group to a ketone at C-3 and esdpG then attaches hydroxy groups at both C-11 and C-12. After that, esdpI hydroxylates at C-20 and esdpH hydroxylates at C-6'. The ether bridge is generated by nucleophilic attack of the hydroxy group at C-20 to the carbonyl carbon at C-3. EsdpH can also functions prior to esdpI. The different combinations of these modification enzymes lead to the production of diverse shearone derivatives, shearone I being the end product of the pathway. The alpha-ketoglutarate-dependent dioxygenase esdpJ seems not to be involved in this pathway. The protein is Geranylgeranyl pyrophosphate synthase esdpD of Penicillium shearii (Eupenicillium shearii).